Here is a 131-residue protein sequence, read N- to C-terminus: UPF0102 protein Ent638_3585 (131 aa).

The tract at residues 1–20 is disordered; it reads MAQIPAGADRPGKLSRKQTG.

It belongs to the UPF0102 family.

This is UPF0102 protein Ent638_3585 from Enterobacter sp. (strain 638).